A 260-amino-acid chain; its full sequence is Flavin-dependent thymidylate synthase (260 aa).

Positions Met1–Asn202 constitute a ThyX domain. FAD-binding positions include Ser55, Arg79–Arg81, and Gln87. DUMP contacts are provided by residues Gln76–Arg79, Gln87–Arg91, and Arg141. A ThyX motif motif is present at residues Arg79–Ser89. FAD-binding positions include Asn157–Arg159 and Asn163. Arg168 contributes to the dUMP binding site. The active-site Involved in ionization of N3 of dUMP, leading to its activation is Arg168.

It belongs to the thymidylate synthase ThyX family. Homotetramer. It depends on FAD as a cofactor.

It catalyses the reaction dUMP + (6R)-5,10-methylene-5,6,7,8-tetrahydrofolate + NADPH + H(+) = dTMP + (6S)-5,6,7,8-tetrahydrofolate + NADP(+). Its pathway is pyrimidine metabolism; dTTP biosynthesis. Functionally, catalyzes the reductive methylation of 2'-deoxyuridine-5'-monophosphate (dUMP) to 2'-deoxythymidine-5'-monophosphate (dTMP) while utilizing 5,10-methylenetetrahydrofolate (mTHF) as the methyl donor, and NADPH and FADH(2) as the reductant. This Sulfolobus acidocaldarius (strain ATCC 33909 / DSM 639 / JCM 8929 / NBRC 15157 / NCIMB 11770) protein is Flavin-dependent thymidylate synthase.